The primary structure comprises 197 residues: Probable GTP-binding protein EngB (197 aa).

Residues 22–197 (TGVEVAFAGR…FKEKLDTWYQ (176 aa)) form the EngB-type G domain. GTP contacts are provided by residues 30–37 (GRSNAGKS), 57–61 (GRTQL), 75–78 (DLPG), 142–145 (TKAD), and 177–179 (FSS). Ser-37 and Thr-59 together coordinate Mg(2+).

This sequence belongs to the TRAFAC class TrmE-Era-EngA-EngB-Septin-like GTPase superfamily. EngB GTPase family. The cofactor is Mg(2+).

Necessary for normal cell division and for the maintenance of normal septation. The protein is Probable GTP-binding protein EngB of Francisella tularensis subsp. holarctica (strain FTNF002-00 / FTA).